Consider the following 399-residue polypeptide: Sex hormone-binding globulin (399 aa).

Residues 1–29 (MENRDSVASLLLLLLLLPPPHTHQGQVLR) form the signal peptide. 2 consecutive Laminin G-like domains span residues 43 to 214 (RYLS…LGNC) and 221 to 387 (GLFF…THSC). A glycan (N-linked (GlcNAc...) asparagine) is linked at asparagine 160. A disulfide bond links cysteine 191 and cysteine 214. Residues asparagine 270, asparagine 353, asparagine 377, and asparagine 393 are each glycosylated (N-linked (GlcNAc...) asparagine). A disulfide bond links cysteine 359 and cysteine 387.

Homodimer. Differentially glycosylated in liver (SHBG) and testis (ABP).

It is found in the secreted. Functions as an androgen transport protein, but may also be involved in receptor mediated processes. Each dimer binds one molecule of steroid. Specific for 5-alpha-dihydrotestosterone, testosterone, and 17-beta-estradiol. Regulates the plasma metabolic clearance rate of steroid hormones by controlling their plasma concentration. The sequence is that of Sex hormone-binding globulin (SHBG) from Phodopus sungorus (Striped hairy-footed hamster).